Consider the following 508-residue polypeptide: RanBP-type and C3HC4-type zinc finger-containing protein 1 (508 aa).

At M1 the chain carries N-acetylmethionine. An interaction with IRF3 region spans residues 1–218 (MDEKTKKAEE…PGCEMCCRAR (218 aa)). The segment at 1 to 268 (MDEKTKKAEE…NYLQHVQLEQ (268 aa)) is interaction with TAB2. At S50 the chain carries Phosphoserine. Residues 55 to 119 (IRLCVSVEDA…DQETLHSHGI (65 aa)) enclose the Ubiquitin-like domain. The tract at residues 69–131 (VTIWLTVRPD…NGDSAYLYLL (63 aa)) is interaction with RNF31. The disordered stretch occupies residues 161–191 (TLQPRGPLEPVLPKPRTHQETGQPDAAPESP). A RanBP2-type zinc finger spans residues 188-220 (PESPPVGWQCPGCTFINKPTRPGCEMCCRARPE). A coiled-coil region spans residues 231-260 (DEEERARLAGEEEALRQYEQRKQQQQEGNY). Residues 276-504 (EPAECPVCYS…VNGIPCHPSC (229 aa)) form a TRIAD supradomain region. The Zn(2+) site is built by C280, C283, C298, H300, C303, C306, and C321. Residues 280-330 (CPVCYSVLAPGEAVVLRECLHTFCRECLQGTIRNSQEAEVSCPFIDNTYSC) form an RING-type 1 zinc finger. Phosphotyrosine is present on Y328. Zn(2+) contacts are provided by C330, C369, C374, C389, C392, C397, C400, H404, C409, C445, and C448. An IBR-type zinc finger spans residues 349 to 409 (QRFLDLGVSI…CKAIHERMNC (61 aa)). The RING-type 2; atypical zinc finger occupies 445–474 (CPQCRIVVQKKDGCDWIRCTVCHTEICWVT). C458 is an active-site residue. The Zn(2+) site is built by C463 and C466.

It belongs to the RBR family. In terms of assembly, component of the LUBAC complex (linear ubiquitin chain assembly complex) which consists of SHARPIN, RBCK1 and RNF31. LUBAC has a MW of approximately 600 kDa suggesting a heteromultimeric assembly of its subunits. Interacts with beta-I-type (PRKCB1) and zeta-type protein kinase C (PRKCZ). Interacts with UBE2L3. Interacts with IREB2 only in iron-rich conditions. Associates with the TNF-R1 signaling complex (TNF-RSC) in a stimulation-dependent manner. Interacts with EYA1, TAB2, TAB3, MAP3K7 TRAF6 and RIPK1. Interacts with IRF3. Post-translationally, auto-ubiquitinated. Auto-ubiquitination leads to degradation by the proteasome. Phosphorylated. In vitro, phosphorylation inhibits auto-ubiquitination activity. As to expression, widely expressed.

The catalysed reaction is [E2 ubiquitin-conjugating enzyme]-S-ubiquitinyl-L-cysteine + [acceptor protein]-L-lysine = [E2 ubiquitin-conjugating enzyme]-L-cysteine + [acceptor protein]-N(6)-ubiquitinyl-L-lysine.. The protein operates within protein modification; protein ubiquitination. Functionally, E3 ubiquitin-protein ligase, which accepts ubiquitin from specific E2 ubiquitin-conjugating enzymes, such as UBE2L3/UBCM4, and then transfers it to substrates. Functions as an E3 ligase for oxidized IREB2 and both heme and oxygen are necessary for IREB2 ubiquitination. Promotes ubiquitination of TAB2 and IRF3 and their degradation by the proteasome. Component of the LUBAC complex which conjugates linear ('Met-1'-linked) polyubiquitin chains to substrates and plays a key role in NF-kappa-B activation and regulation of inflammation. LUBAC conjugates linear polyubiquitin to IKBKG and RIPK1 and is involved in activation of the canonical NF-kappa-B and the JNK signaling pathways. Linear ubiquitination mediated by the LUBAC complex interferes with TNF-induced cell death and thereby prevents inflammation. LUBAC is recruited to the TNF-R1 signaling complex (TNF-RSC) following polyubiquitination of TNF-RSC components by BIRC2 and/or BIRC3 and to conjugate linear polyubiquitin to IKBKG and possibly other components contributing to the stability of the complex. The LUBAC complex is also involved in innate immunity by conjugating linear polyubiquitin chains at the surface of bacteria invading the cytosol to form the ubiquitin coat surrounding bacteria. LUBAC is not able to initiate formation of the bacterial ubiquitin coat, and can only promote formation of linear polyubiquitins on pre-existing ubiquitin. The bacterial ubiquitin coat acts as an 'eat-me' signal for xenophagy and promotes NF-kappa-B activation. Together with OTULIN, the LUBAC complex regulates the canonical Wnt signaling during angiogenesis. Binds polyubiquitin of different linkage types. This is RanBP-type and C3HC4-type zinc finger-containing protein 1 (Rbck1) from Rattus norvegicus (Rat).